We begin with the raw amino-acid sequence, 126 residues long: Small ribosomal subunit protein uS13c (126 aa).

The interval 97-126 (PLRGQRTRTNARTRRGGKKTVAGKKKAPRK) is disordered. Basic residues predominate over residues 101 to 126 (QRTRTNARTRRGGKKTVAGKKKAPRK).

This sequence belongs to the universal ribosomal protein uS13 family. In terms of assembly, part of the 30S ribosomal subunit.

It localises to the plastid. It is found in the chloroplast. Its function is as follows. Located at the top of the head of the 30S subunit, it contacts several helices of the 16S rRNA. This is Small ribosomal subunit protein uS13c from Porphyra purpurea (Red seaweed).